We begin with the raw amino-acid sequence, 256 residues long: Small ribosomal subunit protein eS1 (256 aa).

Residues 1-18 (MAVGKNKRLSKGKKGLKK) show a composition bias toward basic residues. The interval 1–22 (MAVGKNKRLSKGKKGLKKKTQD) is disordered. Position 2 is an N-acetylalanine; partial (Ala-2).

This sequence belongs to the eukaryotic ribosomal protein eS1 family. Component of the small ribosomal subunit. Mature ribosomes consist of a small (40S) and a large (60S) subunit. The 40S subunit contains about 33 different proteins and 1 molecule of RNA (18S). The 60S subunit contains about 49 different proteins and 3 molecules of RNA (25S, 5.8S and 5S).

It localises to the cytoplasm. The sequence is that of Small ribosomal subunit protein eS1 from Pyricularia oryzae (strain Y34) (Rice blast fungus).